The primary structure comprises 207 residues: Large ribosomal subunit protein uL4 (207 aa).

A disordered region spans residues 44-76 (RRQGTQSTKTKSEVRGGGKKPWRQKGTGRARQG). Basic residues predominate over residues 60 to 71 (GGKKPWRQKGTG).

It belongs to the universal ribosomal protein uL4 family. As to quaternary structure, part of the 50S ribosomal subunit.

One of the primary rRNA binding proteins, this protein initially binds near the 5'-end of the 23S rRNA. It is important during the early stages of 50S assembly. It makes multiple contacts with different domains of the 23S rRNA in the assembled 50S subunit and ribosome. In terms of biological role, forms part of the polypeptide exit tunnel. The polypeptide is Large ribosomal subunit protein uL4 (Ruminiclostridium cellulolyticum (strain ATCC 35319 / DSM 5812 / JCM 6584 / H10) (Clostridium cellulolyticum)).